Reading from the N-terminus, the 352-residue chain is Blue-sensitive opsin (352 aa).

Topologically, residues 1–42 (MRGNRLVEFPDDFWIPIPLDTNNVTALSPFLVPQDHLGSPTI) are extracellular. N-linked (GlcNAc...) asparagine glycosylation is present at Asn23. The chain crosses the membrane as a helical span at residues 43 to 67 (FYSMSALMFVLFVAGTAINLLTIAC). Topologically, residues 68 to 79 (TLQYKKLRSHLN) are cytoplasmic. The helical transmembrane segment at 80-105 (YILVNMAVANLIVASTGSSTCFVCFA) threads the bilayer. Residues 106 to 119 (FKYMVLGPLGCKIE) are Extracellular-facing. Cys116 and Cys193 are oxidised to a cystine. Residues 120–139 (GFTAALGGMVSLWSLAVIAF) traverse the membrane as a helical segment. Topologically, residues 140–158 (ERWLVICKPLGNFVFKSEH) are cytoplasmic. Residues 159–182 (ALLCCALTWVCGLCASVPPLVGWS) traverse the membrane as a helical segment. At 183-208 (RYIPEGMQCSCGPDWYTTGNKFNNES) the chain is on the extracellular side. Residue Asn206 is glycosylated (N-linked (GlcNAc...) asparagine). A helical transmembrane segment spans residues 209 to 236 (FVMFLFCFCFAVPFSIIVFCYSQLLFTL). Residues 237–258 (KMAAKAQADSASTQKAEKEVTR) lie on the Cytoplasmic side of the membrane. Residues 259 to 282 (MVVVMVVAFLVCYVPYASFALWVI) form a helical membrane-spanning segment. Residues 283 to 290 (NNRGQTFD) are Extracellular-facing. Residues 291-315 (LRLATIPSCVSKASTVYNPVIYVLL) traverse the membrane as a helical segment. Lys302 is subject to N6-(retinylidene)lysine. At 316-352 (NKQFRLCMKKMLGMSADEDEESSTSQSTTEVSKVGPS) the chain is on the cytoplasmic side. The interval 332 to 352 (DEDEESSTSQSTTEVSKVGPS) is disordered.

This sequence belongs to the G-protein coupled receptor 1 family. Opsin subfamily. Post-translationally, phosphorylated on some or all of the serine and threonine residues present in the C-terminal region. As to expression, the color pigments are found in the cone photoreceptor cells.

Its subcellular location is the membrane. Visual pigments are the light-absorbing molecules that mediate vision. They consist of an apoprotein, opsin, covalently linked to cis-retinal. In Oryzias latipes (Japanese rice fish), this protein is Blue-sensitive opsin.